The following is a 377-amino-acid chain: Gap junction gamma-1 protein (377 aa).

The Cytoplasmic portion of the chain corresponds to 1-18 (MSWSFLTRLLEEINNHST). A helical transmembrane segment spans residues 19-39 (FVGKVWLTVLIIFRIVLTAVG). The Extracellular segment spans residues 40 to 75 (GESIYYDEQSKFTCNTQQPGCENVCYDAFAPLSHVR). The helical transmembrane segment at 76–96 (FWVFQIILITTPSIMYLGFAM) threads the bilayer. The Cytoplasmic portion of the chain corresponds to 97–174 (HRIARQPEMQ…RRIKQDGLMK (78 aa)). The segment at 129–163 (DYEEAEDNQEEDPMICEEEEPEKDSEKGDKKKHDG) is disordered. The segment covering 131–151 (EEAEDNQEEDPMICEEEEPEK) has biased composition (acidic residues). A helical membrane pass occupies residues 175–197 (VYVLQLLFRSVFEVGFLMGQYIL). At 198–228 (YGFEVIPFFVCSRKPCPHTVDCFVSRPTEKT) the chain is on the extracellular side. Residues 229–249 (IFLLIMYAVSALCLFLNLCEL) form a helical membrane-spanning segment. Topologically, residues 250–377 (FHLGIGGIRD…GVGNREKSGL (128 aa)) are cytoplasmic. Disordered regions lie at residues 265-294 (KKEL…LPNG) and 334-377 (LNPT…KSGL). The span at 337-362 (TGDNTHASRSSSPESNSIAAEQNRLN) shows a compositional bias: polar residues.

Belongs to the connexin family. Gamma-type subfamily. In terms of assembly, a connexon is composed of a hexamer of connexins.

The protein localises to the cell membrane. The protein resides in the cell junction. It localises to the gap junction. Its function is as follows. One gap junction consists of a cluster of closely packed pairs of transmembrane channels, the connexons, through which materials of low MW diffuse from one cell to a neighboring cell. In Xenopus tropicalis (Western clawed frog), this protein is Gap junction gamma-1 protein (gjc1).